Here is a 1624-residue protein sequence, read N- to C-terminus: Pappalysin-1 (1624 aa).

The signal sequence occupies residues 1-22 (MRLWSWVLRLGLLSAALGCGLA). The propeptide occupies 23-81 (ERPRRVRRDPRAVRPPRPAAGPATCATRAARGRRASPPPPPGGAWEAVRVPRRRQQRAA). Residues 28–93 (VRRDPRAVRP…AEEPSPPSRA (66 aa)) are disordered. Low complexity predominate over residues 42-51 (AGPATCATRA). Cystine bridges form between cysteine 141–cysteine 232, cysteine 324–cysteine 619, cysteine 329–cysteine 654, cysteine 411–cysteine 425, cysteine 421–cysteine 437, cysteine 454–cysteine 470, cysteine 471–cysteine 482, cysteine 580–cysteine 597, cysteine 584–cysteine 609, cysteine 707–cysteine 875, cysteine 710–cysteine 878, cysteine 750–cysteine 832, cysteine 772–cysteine 778, cysteine 944–cysteine 972, cysteine 957–cysteine 968, cysteine 980–cysteine 987, and cysteine 996–cysteine 1008. Residues 272 to 583 (RGLHTPLPQL…ISEIQSCSDP (312 aa)) form a metalloprotease region. Residues asparagine 387 and asparagine 398 are each glycosylated (N-linked (GlcNAc...) asparagine). Asparagine 426 carries N-linked (GlcNAc...) asparagine glycosylation. A glycan (N-linked (GlcNAc...) asparagine) is linked at asparagine 516. Histidine 559 contributes to the Zn(2+) binding site. Glutamate 560 is an active-site residue. Zn(2+)-binding residues include histidine 563 and histidine 569. N-linked (GlcNAc...) asparagine glycans are attached at residues asparagine 598, asparagine 616, and asparagine 722. The N-linked (GlcNAc...) asparagine glycan is linked to asparagine 822. Asparagine 1023 carries an N-linked (GlcNAc...) asparagine glycan. 19 disulfide bridges follow: cysteine 1033–cysteine 1067, cysteine 1048–cysteine 1136, cysteine 1189–cysteine 1202, cysteine 1212–cysteine 1266, cysteine 1224–cysteine 1235, cysteine 1239–cysteine 1277, cysteine 1282–cysteine 1326, cysteine 1297–cysteine 1307, cysteine 1311–cysteine 1339, cysteine 1343–cysteine 1396, cysteine 1359–cysteine 1370, cysteine 1374–cysteine 1407, cysteine 1412–cysteine 1455, cysteine 1425–cysteine 1435, cysteine 1439–cysteine 1468, cysteine 1475–cysteine 1536, cysteine 1489–cysteine 1499, cysteine 1503–cysteine 1551, and cysteine 1555–cysteine 1573. 5 Sushi domains span residues 1210–1279 (ADCP…ACEP), 1280–1341 (VDCG…LCEL), 1342–1409 (MCLA…TCVP), 1410–1470 (VTCD…VCRE), and 1473–1553 (GQCS…HCVK). N-linked (GlcNAc...) asparagine glycans are attached at residues asparagine 1219 and asparagine 1223. Asparagine 1320 carries an N-linked (GlcNAc...) asparagine glycan. N-linked (GlcNAc...) asparagine glycosylation occurs at asparagine 1516.

It belongs to the peptidase M43B family. As to quaternary structure, homodimer; disulfide-linked. In pregnancy serum, predominantly found as a disulfide-linked 2:2 heterotetramer with the proform of PRG2. Zn(2+) serves as cofactor. Detected in kidney, spleen, brain, ovary, breast, skin, prostate, uterus, and placenta.

The protein localises to the secreted. It catalyses the reaction Cleavage of the 135-Met-|-Lys-136 bond in insulin-like growth factor binding protein (IGFBP)-4, and the 143-Ser-|-Lys-144 bond in IGFBP-5.. In terms of biological role, metalloproteinase which specifically cleaves IGFBP-4 and IGFBP-5, resulting in release of bound IGF. Cleavage of IGFBP-4 is dramatically enhanced by the presence of IGF, whereas cleavage of IGFBP-5 is slightly inhibited by the presence of IGF. Isoform 2 cleaves IGFBP-4 very slowly compared to PAPP-A, but its ability to cleave IGFBP-5 is unaffected. This Mus musculus (Mouse) protein is Pappalysin-1 (Pappa).